We begin with the raw amino-acid sequence, 404 residues long: Phosphopentomutase (404 aa).

Mn(2+) is bound by residues D10, D303, H308, D344, H345, and H356.

Belongs to the phosphopentomutase family. The cofactor is Mn(2+).

The protein resides in the cytoplasm. The enzyme catalyses 2-deoxy-alpha-D-ribose 1-phosphate = 2-deoxy-D-ribose 5-phosphate. It carries out the reaction alpha-D-ribose 1-phosphate = D-ribose 5-phosphate. The protein operates within carbohydrate degradation; 2-deoxy-D-ribose 1-phosphate degradation; D-glyceraldehyde 3-phosphate and acetaldehyde from 2-deoxy-alpha-D-ribose 1-phosphate: step 1/2. Its function is as follows. Isomerase that catalyzes the conversion of deoxy-ribose 1-phosphate (dRib-1-P) and ribose 1-phosphate (Rib-1-P) to deoxy-ribose 5-phosphate (dRib-5-P) and ribose 5-phosphate (Rib-5-P), respectively. The protein is Phosphopentomutase of Shewanella putrefaciens (strain CN-32 / ATCC BAA-453).